The primary structure comprises 101 residues: MAKVSAVEKNKRRKMMVMRYAARRARLKAIVMDQKISLEERFKASVQLAELPRNSAKVRVRNRCEVSGRPRAYYRKLKMSRIALRELGSVGYIPGIIKSSW.

The protein belongs to the universal ribosomal protein uS14 family. As to quaternary structure, part of the 30S ribosomal subunit. Contacts proteins S3 and S10.

Functionally, binds 16S rRNA, required for the assembly of 30S particles and may also be responsible for determining the conformation of the 16S rRNA at the A site. The protein is Small ribosomal subunit protein uS14 of Bartonella quintana (strain Toulouse) (Rochalimaea quintana).